The following is a 311-amino-acid chain: Olfactory receptor 5AN1 (311 aa).

Over 1 to 26 (MTGGGNITEITYFILLGFSDFPRIIK) the chain is Extracellular. The N-linked (GlcNAc...) asparagine glycan is linked to Asn6. The helical transmembrane segment at 27–47 (VLFTIFLVIYITSLAWNLSLI) threads the bilayer. Topologically, residues 48-55 (VLIRMDSH) are cytoplasmic. The chain crosses the membrane as a helical span at residues 56-76 (LHTPMYFFLSNLSFIDVCYIS). Topologically, residues 77 to 100 (STVPKMLSNLLQEQQTITFVGCII) are extracellular. Cys98 and Cys190 are disulfide-bonded. The chain crosses the membrane as a helical span at residues 101–121 (QYFIFSTMGLSESCLMTAMAY). The Cytoplasmic portion of the chain corresponds to 122–134 (DRYAAICNPLLYS). A helical membrane pass occupies residues 135–155 (SIMSPTLCVWMVLGAYMTGLT). The Extracellular segment spans residues 156 to 197 (ASLFQIGALLQLHFCGSNVIRHFFCDMPQLLILSCTDTFFVQ). A helical membrane pass occupies residues 198 to 218 (VMTAILTMFFGIASALVIMIS). The Cytoplasmic portion of the chain corresponds to 219 to 238 (YGYIGISIMKITSAKGRSKA). A helical transmembrane segment spans residues 239-259 (FNTCASHLTAVSLFYTSGIFV). At 260–272 (YLSSSSGGSSSFD) the chain is on the extracellular side. Residues 273–293 (RFASVFYTVVIPMLNPLIYSL) form a helical membrane-spanning segment. Residues 294-311 (RNKEIKDALKRLQKRKCC) lie on the Cytoplasmic side of the membrane.

Belongs to the G-protein coupled receptor 1 family.

It localises to the cell membrane. Functionally, odorant receptor for musk, which specifically recognizes muscone, musk xylol, and musk ketone. Ligand-binding causes a conformation change that triggers signaling via G(s)-class of G alpha protein GNAL, activating adenylyl cyclase. The protein is Olfactory receptor 5AN1 of Homo sapiens (Human).